We begin with the raw amino-acid sequence, 139 residues long: MPTINQLVRKGRKAVQEKSTAPALQKGFNSLKRKSTDLSAPQKRGVCTSVKTITPKKPNSALRKVARVRLTNGIEVSAYIPGIGHNLQEHSVVLIRGGRIKDLPGVRYHIVRGTLDTAGVANRMQGRSKYGAKRPKDKK.

A disordered region spans residues 1 to 21 (MPTINQLVRKGRKAVQEKSTA). The residue at position 102 (aspartate 102) is a 3-methylthioaspartic acid.

Belongs to the universal ribosomal protein uS12 family. In terms of assembly, part of the 30S ribosomal subunit. Contacts proteins S8 and S17. May interact with IF1 in the 30S initiation complex.

Its function is as follows. With S4 and S5 plays an important role in translational accuracy. Functionally, interacts with and stabilizes bases of the 16S rRNA that are involved in tRNA selection in the A site and with the mRNA backbone. Located at the interface of the 30S and 50S subunits, it traverses the body of the 30S subunit contacting proteins on the other side and probably holding the rRNA structure together. The combined cluster of proteins S8, S12 and S17 appears to hold together the shoulder and platform of the 30S subunit. This is Small ribosomal subunit protein uS12 from Alkaliphilus metalliredigens (strain QYMF).